Here is a 68-residue protein sequence, read N- to C-terminus: Putative transcript Y 10 protein (68 aa).

The protein is Putative transcript Y 10 protein (TTTY10) of Homo sapiens (Human).